A 328-amino-acid chain; its full sequence is GTP 3',8-cyclase (328 aa).

Residues 1–229 form the Radical SAM core domain; sequence MNQVDYLRIS…ESQVRGAGPA (229 aa). Arginine 8 is a binding site for GTP. The [4Fe-4S] cluster site is built by cysteine 15 and cysteine 19. Residue tyrosine 21 participates in S-adenosyl-L-methionine binding. Residue cysteine 22 participates in [4Fe-4S] cluster binding. Arginine 60 provides a ligand contact to GTP. Glycine 64 is a binding site for S-adenosyl-L-methionine. Threonine 91 is a GTP binding site. Residue serine 115 coordinates S-adenosyl-L-methionine. Residue lysine 155 participates in GTP binding. Position 189 (methionine 189) interacts with S-adenosyl-L-methionine. [4Fe-4S] cluster is bound by residues cysteine 252 and cysteine 255. 257–259 serves as a coordination point for GTP; it reads RMR. [4Fe-4S] cluster is bound at residue cysteine 269.

It belongs to the radical SAM superfamily. MoaA family. In terms of assembly, monomer and homodimer. The cofactor is [4Fe-4S] cluster.

It catalyses the reaction GTP + AH2 + S-adenosyl-L-methionine = (8S)-3',8-cyclo-7,8-dihydroguanosine 5'-triphosphate + 5'-deoxyadenosine + L-methionine + A + H(+). Its pathway is cofactor biosynthesis; molybdopterin biosynthesis. Catalyzes the cyclization of GTP to (8S)-3',8-cyclo-7,8-dihydroguanosine 5'-triphosphate. The sequence is that of GTP 3',8-cyclase from Nostoc punctiforme (strain ATCC 29133 / PCC 73102).